The following is a 430-amino-acid chain: Histidine--tRNA ligase (430 aa).

This sequence belongs to the class-II aminoacyl-tRNA synthetase family. Homodimer.

The protein resides in the cytoplasm. The enzyme catalyses tRNA(His) + L-histidine + ATP = L-histidyl-tRNA(His) + AMP + diphosphate + H(+). The polypeptide is Histidine--tRNA ligase (hisS) (Clostridium acetobutylicum (strain ATCC 824 / DSM 792 / JCM 1419 / IAM 19013 / LMG 5710 / NBRC 13948 / NRRL B-527 / VKM B-1787 / 2291 / W)).